The sequence spans 480 residues: UDP-N-acetylmuramate--L-alanine ligase (480 aa).

125-131 provides a ligand contact to ATP; the sequence is GTHGKTT.

The protein belongs to the MurCDEF family.

It localises to the cytoplasm. It catalyses the reaction UDP-N-acetyl-alpha-D-muramate + L-alanine + ATP = UDP-N-acetyl-alpha-D-muramoyl-L-alanine + ADP + phosphate + H(+). It functions in the pathway cell wall biogenesis; peptidoglycan biosynthesis. In terms of biological role, cell wall formation. This is UDP-N-acetylmuramate--L-alanine ligase from Ectopseudomonas mendocina (strain ymp) (Pseudomonas mendocina).